A 109-amino-acid polypeptide reads, in one-letter code: Parvalbumin alpha (109 aa).

EF-hand domains follow at residues 38-73 and 77-109; these read KSKEIMQKVFHVLDQDQSGFIEKEELCLILKGFTPE and LSDKETTALLAAGDKDGDGKIGVDEFVTLVSES. 11 residues coordinate Ca(2+): Asp-51, Asp-53, Ser-55, Phe-57, Glu-59, Glu-62, Asp-90, Asp-92, Asp-94, Lys-96, and Glu-101.

This sequence belongs to the parvalbumin family.

Its function is as follows. In muscle, parvalbumin is thought to be involved in relaxation after contraction. It binds two calcium ions. The protein is Parvalbumin alpha of Pelophylax lessonae (Pool frog).